The chain runs to 192 residues: Small ribosomal subunit protein bS16 (192 aa).

Basic and acidic residues predominate over residues 149-161 (EKKAAEAKAKAEA). Positions 149–192 (EKKAAEAKAKAEAEAAAAAEEATETEETPMEAAAEEAPAAESAE) are disordered. Residues 178-192 (MEAAAEEAPAAESAE) are compositionally biased toward low complexity.

Belongs to the bacterial ribosomal protein bS16 family.

The sequence is that of Small ribosomal subunit protein bS16 from Porphyromonas gingivalis (strain ATCC 33277 / DSM 20709 / CIP 103683 / JCM 12257 / NCTC 11834 / 2561).